The sequence spans 99 residues: MMINNLEALKLFAHHKGGGSTANGRNSAGRRLGAKRADGQKINAGSIIFRQRGTKIHPGKNVGIGGDDTLFALTSGVVKFERLGRDRKQVSVYPVEEAK.

Residues 1–12 (MMINNLEALKLF) constitute a propeptide that is removed on maturation. Residues 15–36 (HKGGGSTANGRNSAGRRLGAKR) form a disordered region.

Belongs to the bacterial ribosomal protein bL27 family. Post-translationally, the N-terminus is cleaved by ribosomal processing cysteine protease Prp.

The protein is Large ribosomal subunit protein bL27 of Lactobacillus johnsonii (strain CNCM I-12250 / La1 / NCC 533).